The sequence spans 207 residues: Granulocyte colony-stimulating factor (207 aa).

The first 30 residues, 1–30 (MAGPATQSPMKLMALQLLLWHSALWTVQEA), serve as a signal peptide directing secretion. 2 disulfide bridges follow: cysteine 69/cysteine 75 and cysteine 97/cysteine 107. O-linked (GalNAc...) threonine glycosylation is present at threonine 166.

The protein belongs to the IL-6 superfamily. In terms of assembly, monomer. O-glycan consists of Gal-GalNAc disaccharide which can be modified with up to two sialic acid residues (done in recombinantly expressed G-CSF from CHO cells).

It localises to the secreted. Granulocyte/macrophage colony-stimulating factors are cytokines that act in hematopoiesis by controlling the production, differentiation, and function of 2 related white cell populations of the blood, the granulocytes and the monocytes-macrophages. This CSF induces granulocytes. The sequence is that of Granulocyte colony-stimulating factor (CSF3) from Homo sapiens (Human).